A 201-amino-acid polypeptide reads, in one-letter code: RILP-like protein 2 (201 aa).

Residues 14–108 (SPEMALDKDP…LRDGPQMGVG (95 aa)) enclose the RH1 domain. Residues 67–155 (LEMLEALVNQ…AQDELQCYKS (89 aa)) are a coiled coil. Residues 121 to 197 (RPRFTLQELR…TVKSLFSFKQ (77 aa)) enclose the RH2 domain. A disordered region spans residues 175–201 (TSSPRSNASKEKSTVKSLFSFKQGKNT).

The protein belongs to the RILPL family.

The protein resides in the cytoplasm. Its subcellular location is the cytosol. It is found in the cytoskeleton. It localises to the microtubule organizing center. The protein localises to the centrosome. The protein resides in the cell projection. Its subcellular location is the cilium. Its function is as follows. Involved in cell shape and neuronal morphogenesis, positively regulating the establishment and maintenance of dendritic spines. Plays a role in cellular protein transport. The polypeptide is RILP-like protein 2 (rilpl2) (Xenopus laevis (African clawed frog)).